The primary structure comprises 240 residues: 4-hydroxy-tetrahydrodipicolinate reductase (240 aa).

Residues alanine 79–threonine 81 and serine 103–methionine 106 each bind NAD(+). The active-site Proton donor/acceptor is histidine 135. Histidine 136 is a binding site for (S)-2,3,4,5-tetrahydrodipicolinate. Catalysis depends on lysine 139, which acts as the Proton donor. Glycine 145–threonine 146 is a binding site for (S)-2,3,4,5-tetrahydrodipicolinate.

It belongs to the DapB family.

It is found in the cytoplasm. It carries out the reaction (S)-2,3,4,5-tetrahydrodipicolinate + NAD(+) + H2O = (2S,4S)-4-hydroxy-2,3,4,5-tetrahydrodipicolinate + NADH + H(+). The enzyme catalyses (S)-2,3,4,5-tetrahydrodipicolinate + NADP(+) + H2O = (2S,4S)-4-hydroxy-2,3,4,5-tetrahydrodipicolinate + NADPH + H(+). It functions in the pathway amino-acid biosynthesis; L-lysine biosynthesis via DAP pathway; (S)-tetrahydrodipicolinate from L-aspartate: step 4/4. In terms of biological role, catalyzes the conversion of 4-hydroxy-tetrahydrodipicolinate (HTPA) to tetrahydrodipicolinate. This is 4-hydroxy-tetrahydrodipicolinate reductase from Staphylococcus aureus (strain JH1).